We begin with the raw amino-acid sequence, 541 residues long: Glucans biosynthesis protein D (541 aa).

The segment at residues 1–29 (MHRRNLLKASMAIAAYTGLSASGLLAAQA) is a signal peptide (tat-type signal).

Belongs to the OpgD/OpgG family. In terms of processing, predicted to be exported by the Tat system. The position of the signal peptide cleavage has not been experimentally proven.

It is found in the periplasm. It functions in the pathway glycan metabolism; osmoregulated periplasmic glucan (OPG) biosynthesis. Its function is as follows. Probably involved in the control of the structural glucose backbone of osmoregulated periplasmic glucans (OPGs). The sequence is that of Glucans biosynthesis protein D from Pseudomonas fluorescens (strain SBW25).